Reading from the N-terminus, the 96-residue chain is Putative septation protein SpoVG (96 aa).

It belongs to the SpoVG family.

Could be involved in septation. The chain is Putative septation protein SpoVG from Borrelia hermsii (strain HS1 / DAH).